Here is a 526-residue protein sequence, read N- to C-terminus: Glutamyl-tRNA(Gln) amidotransferase subunit A, mitochondrial (526 aa).

Lysine 76 acts as the Charge relay system in catalysis. The disordered stretch occupies residues 147 to 166; it reads QYREKRKQNSHSENEDSNWL. The active-site Charge relay system is the serine 171. Serine 195 acts as the Acyl-ester intermediate in catalysis.

It belongs to the amidase family. GatA subfamily. Subunit of the heterotrimeric GatCAB amidotransferase (AdT) complex, composed of A (QRSL1), B (GATB) and C (GATC) subunits.

It localises to the mitochondrion. The catalysed reaction is L-glutamyl-tRNA(Gln) + L-glutamine + ATP + H2O = L-glutaminyl-tRNA(Gln) + L-glutamate + ADP + phosphate + H(+). Functionally, allows the formation of correctly charged Gln-tRNA(Gln) through the transamidation of misacylated Glu-tRNA(Gln) in the mitochondria. The reaction takes place in the presence of glutamine and ATP through an activated gamma-phospho-Glu-tRNA(Gln). In Bos taurus (Bovine), this protein is Glutamyl-tRNA(Gln) amidotransferase subunit A, mitochondrial.